We begin with the raw amino-acid sequence, 203 residues long: Imidazoleglycerol-phosphate dehydratase (203 aa).

Belongs to the imidazoleglycerol-phosphate dehydratase family.

Its subcellular location is the cytoplasm. It carries out the reaction D-erythro-1-(imidazol-4-yl)glycerol 3-phosphate = 3-(imidazol-4-yl)-2-oxopropyl phosphate + H2O. It functions in the pathway amino-acid biosynthesis; L-histidine biosynthesis; L-histidine from 5-phospho-alpha-D-ribose 1-diphosphate: step 6/9. This is Imidazoleglycerol-phosphate dehydratase from Synechococcus sp. (strain RCC307).